Consider the following 375-residue polypeptide: Lipid droplet hydrolase 1 (375 aa).

Positions 88–358 (VFVFVPGLAG…CSHNLCFDRP (271 aa)) constitute an AB hydrolase-1 domain. The active-site Charge relay system is the Ser-177. The Microbody targeting signal signature appears at 373–375 (SKL).

This sequence belongs to the AB hydrolase superfamily. Lipase family.

It is found in the lipid droplet. The enzyme catalyses a triacylglycerol + H2O = a diacylglycerol + a fatty acid + H(+). Its function is as follows. Serine hydrolase required for the maintenance of steady state level of non-polar and polar lipids of lipid droplets and thus plays a role in maintaining the lipids homeostasis. Exhibits both esterase and triacylglycerol lipase activity. The protein is Lipid droplet hydrolase 1 of Saccharomyces cerevisiae (strain ATCC 204508 / S288c) (Baker's yeast).